The primary structure comprises 86 residues: uncharacterized protein (86 aa).

This is an uncharacterized protein from Haemophilus influenzae (strain ATCC 51907 / DSM 11121 / KW20 / Rd).